Consider the following 473-residue polypeptide: 3-isopropylmalate dehydratase large subunit 2 (473 aa).

[4Fe-4S] cluster is bound by residues Cys-350, Cys-410, and Cys-413.

This sequence belongs to the aconitase/IPM isomerase family. LeuC type 1 subfamily. Heterodimer of LeuC and LeuD. Requires [4Fe-4S] cluster as cofactor.

The catalysed reaction is (2R,3S)-3-isopropylmalate = (2S)-2-isopropylmalate. It functions in the pathway amino-acid biosynthesis; L-leucine biosynthesis; L-leucine from 3-methyl-2-oxobutanoate: step 2/4. Its function is as follows. Catalyzes the isomerization between 2-isopropylmalate and 3-isopropylmalate, via the formation of 2-isopropylmaleate. This chain is 3-isopropylmalate dehydratase large subunit 2, found in Salmonella choleraesuis (strain SC-B67).